The sequence spans 418 residues: CinA-like protein (418 aa).

It belongs to the CinA family.

This Flavobacterium psychrophilum (strain ATCC 49511 / DSM 21280 / CIP 103535 / JIP02/86) protein is CinA-like protein.